The chain runs to 174 residues: NADH-quinone oxidoreductase subunit B 1 (174 aa).

Residues cysteine 38, cysteine 39, cysteine 104, and cysteine 133 each contribute to the [4Fe-4S] cluster site.

Belongs to the complex I 20 kDa subunit family. As to quaternary structure, NDH-1 is composed of 14 different subunits. Subunits NuoB, C, D, E, F, and G constitute the peripheral sector of the complex. [4Fe-4S] cluster is required as a cofactor.

It localises to the cell membrane. It carries out the reaction a quinone + NADH + 5 H(+)(in) = a quinol + NAD(+) + 4 H(+)(out). Functionally, NDH-1 shuttles electrons from NADH, via FMN and iron-sulfur (Fe-S) centers, to quinones in the respiratory chain. The immediate electron acceptor for the enzyme in this species is believed to be ubiquinone. Couples the redox reaction to proton translocation (for every two electrons transferred, four hydrogen ions are translocated across the cytoplasmic membrane), and thus conserves the redox energy in a proton gradient. This is NADH-quinone oxidoreductase subunit B 1 from Chloroflexus aggregans (strain MD-66 / DSM 9485).